A 228-amino-acid polypeptide reads, in one-letter code: PKHD-type hydroxylase XAC2942 (228 aa).

The Fe2OG dioxygenase domain maps to 78–180; sequence RIYPPLFNRY…RVACFFWAQS (103 aa). Fe cation-binding residues include histidine 96, aspartate 98, and histidine 161. Arginine 171 lines the 2-oxoglutarate pocket.

Fe(2+) serves as cofactor. It depends on L-ascorbate as a cofactor.

In Xanthomonas axonopodis pv. citri (strain 306), this protein is PKHD-type hydroxylase XAC2942.